The chain runs to 590 residues: Proline--tRNA ligase (590 aa).

The protein belongs to the class-II aminoacyl-tRNA synthetase family. ProS type 1 subfamily. In terms of assembly, homodimer.

It localises to the cytoplasm. The catalysed reaction is tRNA(Pro) + L-proline + ATP = L-prolyl-tRNA(Pro) + AMP + diphosphate. Catalyzes the attachment of proline to tRNA(Pro) in a two-step reaction: proline is first activated by ATP to form Pro-AMP and then transferred to the acceptor end of tRNA(Pro). As ProRS can inadvertently accommodate and process non-cognate amino acids such as alanine and cysteine, to avoid such errors it has two additional distinct editing activities against alanine. One activity is designated as 'pretransfer' editing and involves the tRNA(Pro)-independent hydrolysis of activated Ala-AMP. The other activity is designated 'posttransfer' editing and involves deacylation of mischarged Ala-tRNA(Pro). The misacylated Cys-tRNA(Pro) is not edited by ProRS. In Clavibacter sepedonicus (Clavibacter michiganensis subsp. sepedonicus), this protein is Proline--tRNA ligase.